Reading from the N-terminus, the 296-residue chain is Ribonuclease HIII (296 aa).

Residues 80 to 296 (LALIGSDEVG…NTKKAYQRLK (217 aa)) form the RNase H type-2 domain. 3 residues coordinate a divalent metal cation: aspartate 86, glutamate 87, and aspartate 191.

Belongs to the RNase HII family. RnhC subfamily. Mn(2+) is required as a cofactor. The cofactor is Mg(2+).

Its subcellular location is the cytoplasm. The enzyme catalyses Endonucleolytic cleavage to 5'-phosphomonoester.. Functionally, endonuclease that specifically degrades the RNA of RNA-DNA hybrids. This Streptococcus thermophilus (strain ATCC BAA-491 / LMD-9) protein is Ribonuclease HIII.